A 148-amino-acid chain; its full sequence is Deoxyuridine 5'-triphosphate nucleotidohydrolase (148 aa).

Substrate contacts are provided by residues Arg-67–Gly-69, Asn-80, Leu-84–Asp-86, and Met-94.

It belongs to the dUTPase family. Mg(2+) is required as a cofactor.

The catalysed reaction is dUTP + H2O = dUMP + diphosphate + H(+). The protein operates within pyrimidine metabolism; dUMP biosynthesis; dUMP from dCTP (dUTP route): step 2/2. This enzyme is involved in nucleotide metabolism: it produces dUMP, the immediate precursor of thymidine nucleotides and it decreases the intracellular concentration of dUTP so that uracil cannot be incorporated into DNA. The polypeptide is Deoxyuridine 5'-triphosphate nucleotidohydrolase (Paraburkholderia phymatum (strain DSM 17167 / CIP 108236 / LMG 21445 / STM815) (Burkholderia phymatum)).